Consider the following 604-residue polypeptide: Proline--tRNA ligase (604 aa).

The protein belongs to the class-II aminoacyl-tRNA synthetase family. ProS type 1 subfamily. As to quaternary structure, homodimer.

It localises to the cytoplasm. The catalysed reaction is tRNA(Pro) + L-proline + ATP = L-prolyl-tRNA(Pro) + AMP + diphosphate. Functionally, catalyzes the attachment of proline to tRNA(Pro) in a two-step reaction: proline is first activated by ATP to form Pro-AMP and then transferred to the acceptor end of tRNA(Pro). As ProRS can inadvertently accommodate and process non-cognate amino acids such as alanine and cysteine, to avoid such errors it has two additional distinct editing activities against alanine. One activity is designated as 'pretransfer' editing and involves the tRNA(Pro)-independent hydrolysis of activated Ala-AMP. The other activity is designated 'posttransfer' editing and involves deacylation of mischarged Ala-tRNA(Pro). The misacylated Cys-tRNA(Pro) is not edited by ProRS. In Nostoc punctiforme (strain ATCC 29133 / PCC 73102), this protein is Proline--tRNA ligase.